Consider the following 129-residue polypeptide: Protein Turandot A2 (129 aa).

The first 21 residues, 1-21 (MNSSTSLMCFALLLISPLCMG), serve as a signal peptide directing secretion. Asn49 carries an N-linked (GlcNAc...) asparagine glycan.

Belongs to the Turandot family.

The protein localises to the secreted. Functionally, a humoral factor that plays a role in stress tolerance; gives increased resistance to the lethal effects of bacterial challenge and stress. Regulated by the JAK/STAT pathway and NF-KB-like Relish pathway in the fat body, upd3 in the hemocytes and Mekk1 in response to septic injury and consequent immune response. This Drosophila simulans (Fruit fly) protein is Protein Turandot A2 (TotA2).